A 100-amino-acid polypeptide reads, in one-letter code: Sec-independent protein translocase protein TatA (100 aa).

A helical membrane pass occupies residues 1 to 21 (MGALRPWHIAVLVVVLILLFG). Over residues 46–58 (LHDDDRDLAEKAD) the composition is skewed to basic and acidic residues. The tract at residues 46-100 (LHDDDRDLAEKADAQAGYQPMPPQVQQGQHPQQSPYPAPPQQQPVVDPVQRTRDS) is disordered. Residues 69–78 (QVQQGQHPQQ) show a composition bias toward low complexity.

This sequence belongs to the TatA/E family. As to quaternary structure, the Tat system comprises two distinct complexes: a TatABC complex, containing multiple copies of TatA, TatB and TatC subunits, and a separate TatA complex, containing only TatA subunits. Substrates initially bind to the TatABC complex, which probably triggers association of the separate TatA complex to form the active translocon.

The protein resides in the cell membrane. Its function is as follows. Part of the twin-arginine translocation (Tat) system that transports large folded proteins containing a characteristic twin-arginine motif in their signal peptide across membranes. TatA could form the protein-conducting channel of the Tat system. The sequence is that of Sec-independent protein translocase protein TatA from Salinispora tropica (strain ATCC BAA-916 / DSM 44818 / JCM 13857 / NBRC 105044 / CNB-440).